A 488-amino-acid polypeptide reads, in one-letter code: 3-octaprenyl-4-hydroxybenzoate carboxy-lyase (488 aa).

Mn(2+) is bound at residue N172. Residues 175-177, 189-191, and 194-195 each bind prenylated FMN; these read IYR, RWL, and RG. A Mn(2+)-binding site is contributed by E238. Catalysis depends on D287, which acts as the Proton donor.

Belongs to the UbiD family. Homohexamer. Prenylated FMN is required as a cofactor. Mn(2+) serves as cofactor.

It localises to the cell membrane. The catalysed reaction is a 4-hydroxy-3-(all-trans-polyprenyl)benzoate + H(+) = a 2-(all-trans-polyprenyl)phenol + CO2. The protein operates within cofactor biosynthesis; ubiquinone biosynthesis. In terms of biological role, catalyzes the decarboxylation of 3-octaprenyl-4-hydroxy benzoate to 2-octaprenylphenol, an intermediate step in ubiquinone biosynthesis. In Pseudomonas syringae pv. syringae (strain B728a), this protein is 3-octaprenyl-4-hydroxybenzoate carboxy-lyase.